The following is a 918-amino-acid chain: Hexokinase-1 (918 aa).

Methionine 1 bears the N-acetylmethionine mark. The interval 1–10 is mitochondrial-binding peptide (MBP); it reads MIAAQLLAYY. Hexokinase domains follow at residues 16 to 458 and 464 to 906; these read DDQV…MVTA and AEQH…LITA. Residues arginine 30 and 84–89 contribute to the ATP site; that span reads DLGGSS. The segment at 73 to 207 is hexokinase small subdomain 1; the sequence is DGSEKGDFIA…DYDANIVAVV (135 aa). Residue 84 to 88 coordinates D-glucose 6-phosphate; sequence DLGGS. D-glucose-binding positions include serine 155, 172–173, and 208–209; these read TK and ND. The tract at residues 208–447 is hexokinase large subdomain 1; the sequence is NDTVGTMMTC…SDVRFLLSES (240 aa). D-glucose 6-phosphate contacts are provided by aspartate 209 and threonine 232. Residues asparagine 235, glutamate 260, and 291 to 294 each bind D-glucose; that span reads QLFE. Position 337 is a phosphoserine (serine 337). 413–415 is a binding site for D-glucose 6-phosphate; sequence DGS. Residue 425-426 coordinates ATP; sequence RR. D-glucose 6-phosphate-binding positions include threonine 449, 532 to 536, and serine 603; that span reads DLGGT. The interval 521 to 655 is hexokinase small subdomain 2; it reads DGTEHGDFLA…EFDLDVVAVV (135 aa). Position 532–537 (532–537) interacts with ATP; it reads DLGGTN. D-glucose is bound by residues 620-621 and 656-657; these read TK and ND. The hexokinase large subdomain 2 stretch occupies residues 656–895; the sequence is NDTVGTMMTC…CTVSFLLSED (240 aa). Residues aspartate 657 and threonine 680 each contribute to the D-glucose 6-phosphate site. Residue threonine 680 participates in ATP binding. D-glucose contacts are provided by asparagine 683, glutamate 708, and glutamate 742. ATP-binding positions include 747-748, 784-788, and 863-867; these read GM, TKFLS, and TLYKL. D-glucose 6-phosphate is bound by residues 861 to 863 and serine 897; that span reads DGT.

It belongs to the hexokinase family. As to quaternary structure, monomer. Interacts with RABL2/RABL2A; binds preferentially to GTP-bound RABL2. Interacts with VDAC1. The HK1-VDAC1 complex interacts with ATF2. Interacts (via N-terminal spermatogenic cell-specific region) with PFKM (via C-terminus). Interacts with SMAD5. As to expression, expressed in flagella of epididymal sperm.

It is found in the mitochondrion outer membrane. The protein resides in the cytoplasm. The protein localises to the cytosol. The enzyme catalyses a D-hexose + ATP = a D-hexose 6-phosphate + ADP + H(+). It carries out the reaction D-fructose + ATP = D-fructose 6-phosphate + ADP + H(+). The catalysed reaction is D-glucose + ATP = D-glucose 6-phosphate + ADP + H(+). It catalyses the reaction D-mannose + ATP = D-mannose 6-phosphate + ADP + H(+). The enzyme catalyses D-glucosamine + ATP = D-glucosamine 6-phosphate + ADP + H(+). It participates in carbohydrate metabolism; hexose metabolism. It functions in the pathway carbohydrate degradation; glycolysis; D-glyceraldehyde 3-phosphate and glycerone phosphate from D-glucose: step 1/4. Its activity is regulated as follows. Hexokinase is an allosteric enzyme inhibited by its product D-glucose 6-phosphate. Hexokinase activity is inhibited by N-acetyl-D-glucosamine. In terms of biological role, catalyzes the phosphorylation of various hexoses, such as D-glucose, D-glucosamine, D-fructose, D-mannose and 2-deoxy-D-glucose, to hexose 6-phosphate (D-glucose 6-phosphate, D-glucosamine 6-phosphate, D-fructose 6-phosphate, D-mannose 6-phosphate and 2-deoxy-D-glucose 6-phosphate, respectively). Mediates the initial step of glycolysis by catalyzing phosphorylation of D-glucose to D-glucose 6-phosphate. Involved in innate immunity and inflammation by acting as a pattern recognition receptor for bacterial peptidoglycan. When released in the cytosol, N-acetyl-D-glucosamine component of bacterial peptidoglycan inhibits the hexokinase activity of HK1 and causes its dissociation from mitochondrial outer membrane, thereby activating the NLRP3 inflammasome. This Rattus norvegicus (Rat) protein is Hexokinase-1.